Reading from the N-terminus, the 283-residue chain is Digeranylgeranylglyceryl phosphate synthase (283 aa).

Transmembrane regions (helical) follow at residues 5-27 (VEII…AILA), 37-57 (AMLA…YFDY), 85-105 (LLFI…DTWI), 128-148 (PLIG…FAGY), 152-172 (EGLI…MTTA), 203-223 (AIIA…LYIY), 228-248 (INYL…AVLL), and 263-283 (LKTG…TITF).

It belongs to the UbiA prenyltransferase family. DGGGP synthase subfamily. The cofactor is Mg(2+).

The protein resides in the cell membrane. The enzyme catalyses sn-3-O-(geranylgeranyl)glycerol 1-phosphate + (2E,6E,10E)-geranylgeranyl diphosphate = 2,3-bis-O-(geranylgeranyl)-sn-glycerol 1-phosphate + diphosphate. Its pathway is membrane lipid metabolism; glycerophospholipid metabolism. Its function is as follows. Prenyltransferase that catalyzes the transfer of the geranylgeranyl moiety of geranylgeranyl diphosphate (GGPP) to the C2 hydroxyl of (S)-3-O-geranylgeranylglyceryl phosphate (GGGP). This reaction is the second ether-bond-formation step in the biosynthesis of archaeal membrane lipids. The protein is Digeranylgeranylglyceryl phosphate synthase of Methanobrevibacter smithii (strain ATCC 35061 / DSM 861 / OCM 144 / PS).